Here is a 125-residue protein sequence, read N- to C-terminus: Large ribosomal subunit protein bL21 (125 aa).

This sequence belongs to the bacterial ribosomal protein bL21 family. In terms of assembly, part of the 50S ribosomal subunit. Contacts protein L20.

This protein binds to 23S rRNA in the presence of protein L20. This chain is Large ribosomal subunit protein bL21, found in Synechococcus sp. (strain CC9311).